Here is an 851-residue protein sequence, read N- to C-terminus: Pentatricopeptide repeat-containing protein At3g54980, mitochondrial (851 aa).

The transit peptide at 1–26 (MRSLLVFRKIPSRIRLRNLRNNKPFC) directs the protein to the mitochondrion. PPR repeat units follow at residues 162–196 (NSRA…DVIP), 197–231 (FFPY…GVDG), 232–266 (DNVT…GAEP), 267–301 (DSLL…KLCV), 303–337 (SQET…GISM), 338–372 (NVVA…GPSP), 373–407 (NSVT…GLTP), 408–438 (SVFH…SFET), 442–476 (NVFV…GIGP), 477–511 (NVVS…GLKP), 512–546 (NNYT…NIEV), 547–577 (NGVV…MIEE), 583–617 (SCMS…GISP), 618–652 (NVIT…GVKL), 653–687 (DIPA…GLNP), 688–722 (SQPI…GLRC), 723–757 (DLGT…GLVP), 758–792 (DEII…NVTP), and 793–827 (NVLI…GILP).

Belongs to the PPR family. P subfamily.

The protein localises to the mitochondrion. The polypeptide is Pentatricopeptide repeat-containing protein At3g54980, mitochondrial (Arabidopsis thaliana (Mouse-ear cress)).